The following is a 138-amino-acid chain: MTATFLMSLLFGLAFGQTMSLCVPTGYTMHIERRECAYCLTINTTICAGYCMTRDSNGKLFLPKSALSQDVCTYRDVIYRTVVMPGCPPHVIPYISYPVAVSCRCGKCNTDYIDCIHESVTTNYCTKPQKPYLVGFPV.

An N-terminal signal peptide occupies residues 1 to 20 (MTATFLMSLLFGLAFGQTMS). Disulfide bonds link C22–C72, C36–C87, C39–C125, C47–C103, C51–C105, and C108–C115. An N-linked (GlcNAc...) asparagine glycan is attached at N43. Positions 133–138 (LVGFPV) are excised as a propeptide.

It belongs to the glycoprotein hormones subunit beta family. In terms of assembly, heterodimer of a common alpha chain and a unique beta chain which confers biological specificity to thyrotropin, lutropin, follitropin and gonadotropin.

It localises to the secreted. Its function is as follows. Indispensable for the control of thyroid structure and metabolism. The sequence is that of Thyrotropin subunit beta (TSHB) from Monodelphis domestica (Gray short-tailed opossum).